The following is a 185-amino-acid chain: Peptide deformylase (185 aa).

Residues Cys-98 and His-140 each coordinate Fe cation. Glu-141 is an active-site residue. His-144 contacts Fe cation.

This sequence belongs to the polypeptide deformylase family. Fe(2+) is required as a cofactor.

The catalysed reaction is N-terminal N-formyl-L-methionyl-[peptide] + H2O = N-terminal L-methionyl-[peptide] + formate. In terms of biological role, removes the formyl group from the N-terminal Met of newly synthesized proteins. Requires at least a dipeptide for an efficient rate of reaction. N-terminal L-methionine is a prerequisite for activity but the enzyme has broad specificity at other positions. The chain is Peptide deformylase from Parabacteroides distasonis (strain ATCC 8503 / DSM 20701 / CIP 104284 / JCM 5825 / NCTC 11152).